Consider the following 208-residue polypeptide: 3-demethoxyubiquinol 3-hydroxylase (208 aa).

Fe cation contacts are provided by Glu57, Glu87, His90, Glu139, Glu171, and His174.

It belongs to the COQ7 family. Fe cation is required as a cofactor.

The protein localises to the cell membrane. It catalyses the reaction a 5-methoxy-2-methyl-3-(all-trans-polyprenyl)benzene-1,4-diol + AH2 + O2 = a 3-demethylubiquinol + A + H2O. Its pathway is cofactor biosynthesis; ubiquinone biosynthesis. Its function is as follows. Catalyzes the hydroxylation of 2-nonaprenyl-3-methyl-6-methoxy-1,4-benzoquinol during ubiquinone biosynthesis. This is 3-demethoxyubiquinol 3-hydroxylase from Burkholderia cenocepacia (strain ATCC BAA-245 / DSM 16553 / LMG 16656 / NCTC 13227 / J2315 / CF5610) (Burkholderia cepacia (strain J2315)).